The following is a 156-amino-acid chain: Small ribosomal subunit protein uS7 (156 aa).

This sequence belongs to the universal ribosomal protein uS7 family. As to quaternary structure, part of the 30S ribosomal subunit. Contacts proteins S9 and S11.

One of the primary rRNA binding proteins, it binds directly to 16S rRNA where it nucleates assembly of the head domain of the 30S subunit. Is located at the subunit interface close to the decoding center, probably blocks exit of the E-site tRNA. This Chromohalobacter salexigens (strain ATCC BAA-138 / DSM 3043 / CIP 106854 / NCIMB 13768 / 1H11) protein is Small ribosomal subunit protein uS7.